A 136-amino-acid polypeptide reads, in one-letter code: Ribonuclease VapC1 (136 aa).

The 112-residue stretch at 18–129 (ILVDTSVLID…KKHFERLKEF (112 aa)) folds into the PINc domain. Residues D21 and D101 each coordinate Mg(2+).

Belongs to the PINc/VapC protein family. The cofactor is Mg(2+).

In terms of biological role, toxic component of a type II toxin-antitoxin (TA) system. An RNase. Its cognate antitoxin is VapB1. This Methanocaldococcus jannaschii (strain ATCC 43067 / DSM 2661 / JAL-1 / JCM 10045 / NBRC 100440) (Methanococcus jannaschii) protein is Ribonuclease VapC1.